A 467-amino-acid polypeptide reads, in one-letter code: Glutamate--tRNA ligase (467 aa).

The 'HIGH' region motif lies at 13 to 23; that stretch reads PSPTGFLHLGG. Residues 118 to 133 show a composition bias toward basic and acidic residues; it reads ARGDKPRYDGTWRPEP. The segment at 118–141 is disordered; that stretch reads ARGDKPRYDGTWRPEPGKTLPAIP. The short motif at 245–249 is the 'KMSKS' region element; that stretch reads KLSKR. An ATP-binding site is contributed by K248.

It belongs to the class-I aminoacyl-tRNA synthetase family. Glutamate--tRNA ligase type 1 subfamily. Monomer.

It is found in the cytoplasm. It catalyses the reaction tRNA(Glu) + L-glutamate + ATP = L-glutamyl-tRNA(Glu) + AMP + diphosphate. Functionally, catalyzes the attachment of glutamate to tRNA(Glu) in a two-step reaction: glutamate is first activated by ATP to form Glu-AMP and then transferred to the acceptor end of tRNA(Glu). The protein is Glutamate--tRNA ligase of Bordetella avium (strain 197N).